A 30-amino-acid polypeptide reads, in one-letter code: Brevinin-2PTa (30 aa).

Cys-24 and Cys-30 are disulfide-bonded.

As to expression, expressed by the skin glands.

It localises to the secreted. Its function is as follows. Has antibacterial activity against the Gram-positive bacterium S.aureus ATCC 25923 (MIC=18 uM) and the Gram-negative bacterium E.coli ATCC 25726 (MIC=18 uM). The chain is Brevinin-2PTa from Pulchrana picturata (Malaysian fire frog).